A 181-amino-acid chain; its full sequence is Regulator of G-protein signaling 5 (181 aa).

Positions 64-180 (SLDKLLQNSY…VRSEFYKELI (117 aa)) constitute an RGS domain.

Expressed in heart and muscle.

The protein localises to the cytoplasm. Its subcellular location is the membrane. Its function is as follows. Inhibits signal transduction by increasing the GTPase activity of G protein alpha subunits thereby driving them into their inactive GDP-bound form. Binds to G(i)-alpha and G(o)-alpha, but not to G(s)-alpha. The sequence is that of Regulator of G-protein signaling 5 (Rgs5) from Mus musculus (Mouse).